The following is a 42-amino-acid chain: Aspartate-semialdehyde dehydrogenase leader peptide (42 aa).

This chain is Aspartate-semialdehyde dehydrogenase leader peptide, found in Streptococcus mutans serotype c (strain ATCC 700610 / UA159).